Reading from the N-terminus, the 721-residue chain is Polyribonucleotide nucleotidyltransferase (721 aa).

Positions 495 and 501 each coordinate Mg(2+). Positions 562-621 (PRLLSFRIDPELIGTVIGPGGRTIKGITERTNTKIDIEDGGIVTIASHDGAAAEEAQKII) constitute a KH domain. An S1 motif domain is found at 631-699 (GEVFSGSITR…NRGRINLTLR (69 aa)).

Belongs to the polyribonucleotide nucleotidyltransferase family. Requires Mg(2+) as cofactor.

The protein localises to the cytoplasm. The catalysed reaction is RNA(n+1) + phosphate = RNA(n) + a ribonucleoside 5'-diphosphate. In terms of biological role, involved in mRNA degradation. Catalyzes the phosphorolysis of single-stranded polyribonucleotides processively in the 3'- to 5'-direction. This chain is Polyribonucleotide nucleotidyltransferase, found in Synechococcus sp. (strain CC9605).